Reading from the N-terminus, the 419-residue chain is NF-kappa-B essential modulator (419 aa).

The segment at 1 to 197 is required for interaction with and ubiquitination by MARCHF2; it reads MNRHLWKSQL…REALQQQHSV (197 aa). Residues Ser-31 and Ser-43 each carry the phosphoserine; by IKKB modification. The interaction with CHUK/IKBKB stretch occupies residues 44–111; the sequence is EQGAPETLQR…KLVERLGLEK (68 aa). Residues 49–356 adopt a coiled-coil conformation; it reads ETLQRCLEEN…CQESARIEDM (308 aa). Ser-68 carries the phosphoserine modification. Residue Ser-85 is modified to Phosphoserine; by ATM. Residues Lys-111, Lys-139, Lys-143, Lys-226, Lys-246, and Lys-264 each participate in a glycyl lysine isopeptide (Lys-Gly) (interchain with G-Cter in ubiquitin) cross-link. The segment at 150 to 257 is interaction with TANK; the sequence is LGELQESQSR…SVVGSERKRG (108 aa). The tract at residues 242-350 is ubiquitin-binding (UBAN); the sequence is DNHIKSSVVG…SKLKASCQES (109 aa). Residues 246–365 are self-association; the sequence is KSSVVGSERK…MRKRHVEVSQ (120 aa). Positions 251-419 are required for interaction with TNFAIP3; the sequence is GSERKRGMQL…LQIHVMECIE (169 aa). A Glycyl lysine isopeptide (Lys-Gly) (interchain with G-Cter in SUMO); alternate cross-link involves residue Lys-277. A Glycyl lysine isopeptide (Lys-Gly) (interchain with G-Cter in ubiquitin); alternate cross-link involves residue Lys-277. Residues Lys-283, Lys-285, Lys-292, and Lys-302 each participate in a glycyl lysine isopeptide (Lys-Gly) (interchain with G-Cter in ubiquitin) cross-link. Residue Lys-309 forms a Glycyl lysine isopeptide (Lys-Gly) (interchain with G-Cter in SUMO); alternate linkage. Residue Lys-309 forms a Glycyl lysine isopeptide (Lys-Gly) (interchain with G-Cter in ubiquitin); alternate linkage. Residues Lys-321 and Lys-325 each participate in a glycyl lysine isopeptide (Lys-Gly) (interchain with G-Cter in ubiquitin) cross-link. The interval 322-343 is leucine-zipper; it reads LAEKKELLQEQLEQLQREYSKL. Lys-326 participates in a covalent cross-link: Glycyl lysine isopeptide (Lys-Gly) (interchain with G-Cter in ubiquitin and interchain with MARCHF2). The disordered stretch occupies residues 358–395; that stretch reads KRHVEVSQAPLPPAPAYLSSPLALPSQRRSPPEEPPDF. Residues 373 to 386 are compositionally biased toward low complexity; it reads AYLSSPLALPSQRR. Ser-376 is modified (phosphoserine; by IKKB). The tract at residues 382-419 is interaction with CYLD; it reads PSQRRSPPEEPPDFCCPKCQYQAPDMDTLQIHVMECIE. The residue at position 387 (Ser-387) is a Phosphoserine. A CCHC NOA-type zinc finger spans residues 389–419; it reads PEEPPDFCCPKCQYQAPDMDTLQIHVMECIE. Cys-397 is a binding site for Zn(2+). Residue Lys-399 forms a Glycyl lysine isopeptide (Lys-Gly) (interchain with G-Cter in ubiquitin) linkage. Zn(2+) contacts are provided by Cys-400, His-413, and Cys-417.

In terms of assembly, homodimer; disulfide-linked. Component of the I-kappa-B-kinase (IKK) core complex consisting of CHUK, IKBKB and IKBKG; probably four alpha/CHUK-beta/IKBKB dimers are associated with four gamma/IKBKG subunits. The IKK core complex seems to associate with regulatory or adapter proteins to form a IKK-signalosome holo-complex. The IKK complex associates with TERF2IP/RAP1, leading to promote IKK-mediated phosphorylation of RELA/p65. Part of a complex composed of NCOA2, NCOA3, CHUK/IKKA, IKBKB, IKBKG and CREBBP. Interacts with COPS3, CYLD, NALP2, TRPC4AP and PIDD1. Interacts with ATM; the complex is exported from the nucleus. Interacts with TRAF6. Interacts with IKBKE. Interacts with TANK; the interaction is enhanced by IKBKE and TBK1. Part of a ternary complex consisting of TANK, IKBKB and IKBKG. Interacts with ZFAND5. Interacts with RIPK2. Interacts with TNIP1 and TNFAIP3; TNIP1 facilitates the TNFAIP3-mediated de-ubiquitination of IKBKG. Interacts with TNFAIP3; the interaction is induced by TNF stimulation and by polyubiquitin. Binds (via UBAN region) polyubiquitin; binds both 'Lys-63'-linked and linear polyubiquitin, with higher affinity for linear ubiquitin. Interacts with NLRP10. Interacts with TANK; this interaction increases in response to DNA damage. Interacts with USP10; this interaction increases in response to DNA damage. Interacts with ZC3H12A; this interaction increases in response to DNA damage. Interacts with IFIT5; the interaction synergizes the recruitment of IKK to MAP3K7 and enhances IKK phosphorylation. Interacts with TRIM29; this interaction induces IKBKG/NEMO ubiquitination and proteolytic degradation. Interacts with TRIM13; this interaction leads to IKBKG/NEMO ubiquitination. Interacts with ARFIP2. Interacts with RIPK1. Interacts with (ubiquitinated) BCL10; interaction with polyubiquitinated BCL10 via both 'Lys-63'-linked and linear ubiquitin is required for TCR-induced NF-kappa-B activation. Interacts with MARCHF2; during the late stages of macrophage viral and bacterial infection; the interaction leads to ubiquitination and degradation of IKBKG/NEMO. (Microbial infection) Interacts with Molluscum contagiosum virus protein MC005; this interaction inhibits NF-kappa-B activation. As to quaternary structure, (Microbial infection) Interacts with HTLV-1 Tax oncoprotein; the interaction activates IKBKG. In terms of assembly, (Microbial infection) Interacts with Shigella flexneri ipah9.8; the interaction promotes TNIP1-dependent 'Lys-27'-linked polyubiquitination of IKBKG which perturbs NF-kappa-B activation during bacterial infection. (Microbial infection) Interacts with SARS coronavirus-2/SARS-CoV-2 virus protein ORF9B (via N-terminus); the interaction inhibits polyubiquitination through 'Lys-63' and NF-kappa-B activation. In terms of processing, phosphorylation at Ser-68 attenuates aminoterminal homodimerization. Post-translationally, polyubiquitinated on Lys-285 via 'Lys-63'-linked ubiquitin; the ubiquitination is mediated downstream of NOD2 and RIPK2 and probably plays a role in signaling by facilitating interactions with ubiquitin domain-containing proteins and activates the NF-kappa-B pathway. Polyubiquitinated on Lys-285 and Lys-399 through 'Lys-63'-linked ubiquitin; the ubiquitination is mediated by BCL10, MALT1 and TRAF6 and probably plays a role in signaling by facilitating interactions with ubiquitin domain-containing proteins and activates the NF-kappa-B pathway. Monoubiquitinated on Lys-277 and Lys-309; promotes nuclear export. Polyubiquitinated through 'Lys-27' by TRIM23; involved in antiviral innate and inflammatory responses. Linear polyubiquitinated on Lys-111, Lys-143, Lys-226, Lys-246, Lys-264, Lys-277, Lys-285, Lys-292, Lys-302, Lys-309 and Lys-326; the head-to-tail polyubiquitination is mediated by the LUBAC complex and plays a key role in NF-kappa-B activation. Deubiquitinated by USP10 in a TANK-dependent and -independent manner, leading to the negative regulation of NF-kappa-B signaling upon DNA damage. Ubiquitinated at Lys-326 by MARCHF2 following bacterial and viral infection which leads to its degradation. Polyubiquitinated via 'Lys-29'-linked ubiquitin; leading to lysosomal degradation. Sumoylated on Lys-277 and Lys-309 with SUMO1; the modification results in phosphorylation of Ser-85 by ATM leading to a replacement of the sumoylation by mono-ubiquitination on these residues. In terms of processing, neddylated by TRIM40, resulting in stabilization of NFKBIA and down-regulation of NF-kappa-B activity. Post-translationally, (Microbial infection) Cleaved by hepatitis A virus (HAV) protease 3C allowing the virus to disrupt the host innate immune signaling. (Microbial infection) Deubiquitinated by Epstein-Barr virus BPLF1 on both 'Lys-48' and 'Lys-63'-linked ubiquitin chains; leading to NF-kappa-B signaling inhibition. In terms of processing, (Microbial infection) Polyubiquitinated on Lys-309 and Lys-321 via 'Lys-27'-linked ubiquitin by Shigella flexneri E3 ubiquitin-protein ligase ipah9.8, leading to its degradation by the proteasome. Post-translationally, (Microbial infection) Polyubiquitination through 'Lys-63' is interrupted by interaction with SARS coronavirus-2/SARS-CoV-2 virus protein ORF9B which inhibits the NF-kappa-B pathway. Heart, brain, placenta, lung, liver, skeletal muscle, kidney and pancreas.

The protein localises to the cytoplasm. Its subcellular location is the nucleus. In terms of biological role, regulatory subunit of the IKK core complex which phosphorylates inhibitors of NF-kappa-B thus leading to the dissociation of the inhibitor/NF-kappa-B complex and ultimately the degradation of the inhibitor. Its binding to scaffolding polyubiquitin plays a key role in IKK activation by multiple signaling receptor pathways. Can recognize and bind both 'Lys-63'-linked and linear polyubiquitin upon cell stimulation, with a much higher affinity for linear polyubiquitin. Could be implicated in NF-kappa-B-mediated protection from cytokine toxicity. Essential for viral activation of IRF3. Involved in TLR3- and IFIH1-mediated antiviral innate response; this function requires 'Lys-27'-linked polyubiquitination. Its function is as follows. (Microbial infection) Also considered to be a mediator for HTLV-1 Tax oncoprotein activation of NF-kappa-B. This Homo sapiens (Human) protein is NF-kappa-B essential modulator.